The chain runs to 732 residues: MATLAASSSLLSCLLVLFLSSVSAVTDDKQVYIVYMGSLSSRADYTPTSDHMNILQEVTGESSIEGRLVRSYKRSFNGFAARLTESERERVAKMVGVVSVFPNKKLQLQTTTSWDFMGLKEGIKTKRNPTVESDTIIGVIDSGITPESQSFSDKGFGPPPQKWKGVCSGGKNFTCNNKLIGARDYTSEGTRDMDGHGTHTASTAAGNAVVDASFFGIGNGTVRGGVPASRVAAYKVCTPTGCSSEALLSAFDDAIADGVDLITISIGDKTASMFQNDPIAIGAFHAMAKGVLTVNSAGNSGPKPISVSGVAPWILTVAASTTNRGFVTKVVLGNGKTLVGKSVNAYEMKGKDYPLVYGKSAASSACDAESAGLCELSCVDKSRVKGKILVCGGPGGLKIVESVGAVGLIYRTPKPDVAFIHPLPAAGLLTEDFESLVSYLESTDSPQAIVLKTEAIFNRTSPVIASFSSRGPNTIAVDILKPDITAPGVEILAAYSPAGEPSQDDTRHVKYSVLSGTSMSCPHVAGVAAYVKTFNPKWSPSMIQSAIMTTAWPVNATGTGIASTEFAYGSGHVDPIAASNPGLVYELDKSDHIAFLCGMNYTSQVLKVISGETVTCSEAKKILPRNLNYPSMSAKLSGSGTTFTVTFNRTLTNVGTPNSTYTSKVVAGHGSKLDVKITPSVLSFKTVNEKQSFTVTVTGSNLDSEVPSSANLIWSDGTHNVRSPIVVYTSDY.

The signal sequence occupies residues 1–24 (MATLAASSSLLSCLLVLFLSSVSA). The propeptide at 25–109 (VTDDKQVYIV…VFPNKKLQLQ (85 aa)) is activation peptide. The 78-residue stretch at 31–108 (VYIVYMGSLS…SVFPNKKLQL (78 aa)) folds into the Inhibitor I9 domain. The Peptidase S8 domain occupies 113 to 579 (SWDFMGLKEG…SGHVDPIAAS (467 aa)). The active-site Charge relay system is Asp-141. The N-linked (GlcNAc...) asparagine glycan is linked to Asn-172. Catalysis depends on His-196, which acts as the Charge relay system. Residue Asn-219 is glycosylated (N-linked (GlcNAc...) asparagine). One can recognise a PA domain in the interval 352–436 (DYPLVYGKSA…GLLTEDFESL (85 aa)). Asn-458 carries an N-linked (GlcNAc...) asparagine glycan. Catalysis depends on Ser-518, which acts as the Charge relay system. N-linked (GlcNAc...) asparagine glycans are attached at residues Asn-555, Asn-600, Asn-648, and Asn-658.

It belongs to the peptidase S8 family. Post-translationally, the C-terminal propeptide is autocleaved.

The protein resides in the secreted. The protein is Subtilisin-like protease SBT4.13 of Arabidopsis thaliana (Mouse-ear cress).